Here is a 160-residue protein sequence, read N- to C-terminus: Major allergen Pru av 1 (160 aa).

It belongs to the BetVI family.

The protein is Major allergen Pru av 1 (PRUA1) of Prunus avium (Cherry).